The sequence spans 868 residues: DNA topoisomerase 1 (868 aa).

In terms of domain architecture, Toprim spans 3–147 (KSLVIVESPA…RYKRVVFNEI (145 aa)). Residue glutamate 9 participates in Mg(2+) binding. Positions 34–70 (IRDLPTSGSSSSKEPAAKGRKSASEAPALSPKEKARR) are disordered. Aspartate 116 provides a ligand contact to Mg(2+). Residues 163-580 (DINRVNAQQA…EFYGDFKKKL (418 aa)) form the Topo IA-type catalytic domain. Positions 197–202 (SAGRVQ) are interaction with DNA. Residue tyrosine 324 is the O-(5'-phospho-DNA)-tyrosine intermediate of the active site. C4-type zinc fingers lie at residues 602 to 633 (CREC…KERC), 664 to 691 (CPIC…NPDC), and 713 to 738 (CDKC…NPTC).

This sequence belongs to the type IA topoisomerase family. In terms of assembly, monomer. The cofactor is Mg(2+).

The catalysed reaction is ATP-independent breakage of single-stranded DNA, followed by passage and rejoining.. Releases the supercoiling and torsional tension of DNA, which is introduced during the DNA replication and transcription, by transiently cleaving and rejoining one strand of the DNA duplex. Introduces a single-strand break via transesterification at a target site in duplex DNA. The scissile phosphodiester is attacked by the catalytic tyrosine of the enzyme, resulting in the formation of a DNA-(5'-phosphotyrosyl)-enzyme intermediate and the expulsion of a 3'-OH DNA strand. The free DNA strand then undergoes passage around the unbroken strand, thus removing DNA supercoils. Finally, in the religation step, the DNA 3'-OH attacks the covalent intermediate to expel the active-site tyrosine and restore the DNA phosphodiester backbone. This chain is DNA topoisomerase 1, found in Pseudomonas aeruginosa (strain ATCC 15692 / DSM 22644 / CIP 104116 / JCM 14847 / LMG 12228 / 1C / PRS 101 / PAO1).